Here is a 214-residue protein sequence, read N- to C-terminus: Adenylate kinase (214 aa).

Residue 10–15 participates in ATP binding; that stretch reads GAGKGT. The tract at residues 30-59 is NMP; the sequence is STGDMFRDHKARGTELGKTVQAIMDAGGLV. AMP-binding positions include T31, R36, 57-59, 85-88, and Q92; these read GLV and GYPR. An LID region spans residues 126 to 163; that stretch reads GRRSCPKCGAVYHVSANPPRRMGYCDRDDAGLVQRDDD. Position 127 (R127) interacts with ATP. Zn(2+)-binding residues include C130 and C133. 136–137 contacts ATP; the sequence is VY. Residues C150 and D153 each contribute to the Zn(2+) site. AMP-binding residues include R160 and R171. An ATP-binding site is contributed by G199.

This sequence belongs to the adenylate kinase family. As to quaternary structure, monomer.

It localises to the cytoplasm. The catalysed reaction is AMP + ATP = 2 ADP. It participates in purine metabolism; AMP biosynthesis via salvage pathway; AMP from ADP: step 1/1. Catalyzes the reversible transfer of the terminal phosphate group between ATP and AMP. Plays an important role in cellular energy homeostasis and in adenine nucleotide metabolism. This Anaeromyxobacter sp. (strain Fw109-5) protein is Adenylate kinase.